A 477-amino-acid chain; its full sequence is Glycogen synthase (477 aa).

K15 is an ADP-alpha-D-glucose binding site.

Belongs to the glycosyltransferase 1 family. Bacterial/plant glycogen synthase subfamily.

The enzyme catalyses [(1-&gt;4)-alpha-D-glucosyl](n) + ADP-alpha-D-glucose = [(1-&gt;4)-alpha-D-glucosyl](n+1) + ADP + H(+). The protein operates within glycan biosynthesis; glycogen biosynthesis. Functionally, synthesizes alpha-1,4-glucan chains using ADP-glucose. This chain is Glycogen synthase, found in Citrobacter koseri (strain ATCC BAA-895 / CDC 4225-83 / SGSC4696).